Reading from the N-terminus, the 385-residue chain is MSWQQRVDDALTARRATDTLRRRYVVSQGAGRWLVANGRQYLNFSSNDYLGLSQHPQIIRAWQQAATRFGVGSGGSGHISGYSVAHQALEEELAQWLGYPRALLFISGFAANQAVITALMKKNDRIVADRLSHASLLEAANLSPAQLRRFIHNDTQHLSRLLQSPCVGQQLVVTEGVYSMDGDSAPLAEIQHIARRHHAWLLVDDAHGIGVTGDEGRGTCWQRGVKPELLVVTFGKGFGVSGAAVLCSESVADYLLQFARHLVYSTSMPPAQAQALSASLAVIRSDEGRERREKLAALVQRFRAGVNASRFTLLNAHSAIQPLIVGDNSRALRLAEALRQQGCWATAIRPPTVPVGTARLRLTLTQAHEACDIDRLLEVLHGAGE.

Arg21 contacts substrate. 108–109 (GF) lines the pyridoxal 5'-phosphate pocket. Residue His133 coordinates substrate. Pyridoxal 5'-phosphate contacts are provided by Ser179, His207, and Thr233. Position 236 is an N6-(pyridoxal phosphate)lysine (Lys236). Thr352 contributes to the substrate binding site.

It belongs to the class-II pyridoxal-phosphate-dependent aminotransferase family. BioF subfamily. As to quaternary structure, homodimer. Pyridoxal 5'-phosphate serves as cofactor.

It carries out the reaction 6-carboxyhexanoyl-[ACP] + L-alanine + H(+) = (8S)-8-amino-7-oxononanoate + holo-[ACP] + CO2. It functions in the pathway cofactor biosynthesis; biotin biosynthesis. Its function is as follows. Catalyzes the decarboxylative condensation of pimeloyl-[acyl-carrier protein] and L-alanine to produce 8-amino-7-oxononanoate (AON), [acyl-carrier protein], and carbon dioxide. The chain is 8-amino-7-oxononanoate synthase from Salmonella enteritidis PT4 (strain P125109).